Consider the following 219-residue polypeptide: 3-dehydroquinate dehydratase (219 aa).

Residues serine 10, 29–31 (EVR), and arginine 59 each bind 3-dehydroquinate. The active-site Proton donor/acceptor is the histidine 116. The active-site Schiff-base intermediate with substrate is lysine 142. 2 residues coordinate 3-dehydroquinate: arginine 180 and glutamine 203.

This sequence belongs to the type-I 3-dehydroquinase family. As to quaternary structure, homodimer.

It carries out the reaction 3-dehydroquinate = 3-dehydroshikimate + H2O. It participates in metabolic intermediate biosynthesis; chorismate biosynthesis; chorismate from D-erythrose 4-phosphate and phosphoenolpyruvate: step 3/7. Involved in the third step of the chorismate pathway, which leads to the biosynthesis of aromatic amino acids. Catalyzes the cis-dehydration of 3-dehydroquinate (DHQ) and introduces the first double bond of the aromatic ring to yield 3-dehydroshikimate. The sequence is that of 3-dehydroquinate dehydratase from Methanocella arvoryzae (strain DSM 22066 / NBRC 105507 / MRE50).